A 185-amino-acid chain; its full sequence is Ribosome-recycling factor (185 aa).

It belongs to the RRF family.

It localises to the cytoplasm. Its function is as follows. Responsible for the release of ribosomes from messenger RNA at the termination of protein biosynthesis. May increase the efficiency of translation by recycling ribosomes from one round of translation to another. This Lactococcus lactis subsp. cremoris (strain SK11) protein is Ribosome-recycling factor.